Consider the following 148-residue polypeptide: Ribonuclease H (148 aa).

The 142-residue stretch at 1-142 folds into the RNase H type-1 domain; it reads MSDSVEMFTD…ADQLANRGVD (142 aa). Aspartate 10, glutamate 48, aspartate 70, and aspartate 134 together coordinate Mg(2+).

Belongs to the RNase H family. In terms of assembly, monomer. The cofactor is Mg(2+).

Its subcellular location is the cytoplasm. It carries out the reaction Endonucleolytic cleavage to 5'-phosphomonoester.. In terms of biological role, endonuclease that specifically degrades the RNA of RNA-DNA hybrids. This chain is Ribonuclease H, found in Pseudomonas putida (strain ATCC 700007 / DSM 6899 / JCM 31910 / BCRC 17059 / LMG 24140 / F1).